We begin with the raw amino-acid sequence, 318 residues long: tRNA U34 carboxymethyltransferase (318 aa).

Carboxy-S-adenosyl-L-methionine contacts are provided by residues K88, W102, K107, G126, 176 to 177 (LE), M192, Y196, and R311.

It belongs to the class I-like SAM-binding methyltransferase superfamily. CmoB family. Homotetramer.

The enzyme catalyses carboxy-S-adenosyl-L-methionine + 5-hydroxyuridine(34) in tRNA = 5-carboxymethoxyuridine(34) in tRNA + S-adenosyl-L-homocysteine + H(+). Catalyzes carboxymethyl transfer from carboxy-S-adenosyl-L-methionine (Cx-SAM) to 5-hydroxyuridine (ho5U) to form 5-carboxymethoxyuridine (cmo5U) at position 34 in tRNAs. This Pseudomonas putida (strain GB-1) protein is tRNA U34 carboxymethyltransferase.